Reading from the N-terminus, the 217-residue chain is Glutathione S-transferase 1 (217 aa).

In terms of domain architecture, GST N-terminal spans 1 to 83 (MVMTLYKLDA…YLVSKYGADD (83 aa)). Glutathione-binding positions include Ser11, 53 to 55 (HTV), and 67 to 69 (DSH). In terms of domain architecture, GST C-terminal spans 89–211 (DPKKRAIVDQ…APGNDLCKDL (123 aa)).

Belongs to the GST superfamily. Theta family. Homodimer.

It catalyses the reaction RX + glutathione = an S-substituted glutathione + a halide anion + H(+). Functionally, conjugation of reduced glutathione to a wide number of exogenous and endogenous hydrophobic electrophiles. In Manduca sexta (Tobacco hawkmoth), this protein is Glutathione S-transferase 1 (GST1).